Reading from the N-terminus, the 539-residue chain is Putative dimethylaniline monooxygenase [N-oxide-forming] 6 (539 aa).

FAD is bound by residues 9–13, Glu-32, 40–41, and 61–62; these read GAGVS, LW, and NS. Residue 195-198 coordinates NADP(+); that stretch reads SGSD. Residues 518-538 form a helical membrane-spanning segment; the sequence is FYNLLKMLSFPLLLLAVTLTF.

This sequence belongs to the FMO family. It depends on FAD as a cofactor.

The protein resides in the microsome membrane. It is found in the endoplasmic reticulum membrane. It catalyses the reaction N,N-dimethylaniline + NADPH + O2 + H(+) = N,N-dimethylaniline N-oxide + NADP(+) + H2O. It is probable that this protein is only produced in very small quantity or not at all as the gene coding for it seems to be unable to produce full-length transcripts. In Homo sapiens (Human), this protein is Putative dimethylaniline monooxygenase [N-oxide-forming] 6 (FMO6P).